The following is a 567-amino-acid chain: Mitochondrial distribution and morphology protein 34 (567 aa).

The region spanning 1 to 224 (MSFKFNEESF…LPSALFNMSR (224 aa)) is the SMP-LTD domain. Positions 392-416 (NKATETSSNLNADSEITPVSSSHNA) are enriched in polar residues. A disordered region spans residues 392 to 453 (NKATETSSNL…NRSSSFTSSI (62 aa)). The segment covering 417 to 452 (TSSVNTITSLTTSSLGSTAGSSNSKNTNRSSSFTSS) has biased composition (low complexity).

It belongs to the MDM34 family. Component of the ER-mitochondria encounter structure (ERMES) or MDM complex, composed of MMM1, MDM10, MDM12 and MDM34.

It localises to the mitochondrion outer membrane. Functionally, component of the ERMES/MDM complex, which serves as a molecular tether to connect the endoplasmic reticulum (ER) and mitochondria. Components of this complex are involved in the control of mitochondrial shape and protein biogenesis, and function in nonvesicular lipid trafficking between the ER and mitochondria. MDM34 is required for the interaction of the ER-resident membrane protein MMM1 and the outer mitochondrial membrane-resident beta-barrel protein MDM10. This is Mitochondrial distribution and morphology protein 34 from Vanderwaltozyma polyspora (strain ATCC 22028 / DSM 70294 / BCRC 21397 / CBS 2163 / NBRC 10782 / NRRL Y-8283 / UCD 57-17) (Kluyveromyces polysporus).